The sequence spans 83 residues: Large ribosomal subunit protein bL27c (83 aa).

The tract at residues 1–21 (MAHKKGAGSTKNGRDSNAKRL) is disordered.

This sequence belongs to the bacterial ribosomal protein bL27 family.

The protein resides in the plastid. Its subcellular location is the chloroplast. The sequence is that of Large ribosomal subunit protein bL27c from Phaeodactylum tricornutum (strain CCAP 1055/1).